An 860-amino-acid polypeptide reads, in one-letter code: Linoleate 9S-lipoxygenase A (860 aa).

The PLAT domain occupies 29-159 (NALDFTDLAG…RYKSDRIFFA (131 aa)). A Lipoxygenase domain is found at 162–860 (PYLPSETPEL…GKGIPNSVSI (699 aa)). The disordered stretch occupies residues 209-246 (PDQGKENVRTTLGGSADYPYPRRGRTGRPPTRTDPKSE). Fe cation contacts are provided by histidine 521, histidine 526, histidine 712, asparagine 716, and isoleucine 860.

It belongs to the lipoxygenase family. Monomer. Fe cation is required as a cofactor. Expressed in germinating seeds as well as in ripening fruit.

It localises to the cytoplasm. The catalysed reaction is (9Z,12Z)-octadecadienoate + O2 = (9S)-hydroperoxy-(10E,12Z)-octadecadienoate. The protein operates within lipid metabolism; oxylipin biosynthesis. In terms of biological role, plant lipoxygenase may be involved in a number of diverse aspects of plant physiology including growth and development, pest resistance, and senescence or responses to wounding. It catalyzes the hydroperoxidation of lipids containing a cis,cis-1,4-pentadiene structure. The sequence is that of Linoleate 9S-lipoxygenase A (LOX1.1) from Solanum lycopersicum (Tomato).